An 812-amino-acid polypeptide reads, in one-letter code: Probable inorganic carbon transporter subunit DabA (812 aa).

Zn(2+)-binding residues include Cys338, Asp340, His498, and Cys513.

It belongs to the inorganic carbon transporter (TC 9.A.2) DabA family. As to quaternary structure, forms a complex with DabB. Zn(2+) serves as cofactor.

It is found in the cell inner membrane. Part of an energy-coupled inorganic carbon pump. This Methylobacterium sp. (strain 4-46) protein is Probable inorganic carbon transporter subunit DabA.